We begin with the raw amino-acid sequence, 252 residues long: 5'-nucleotidase SurE (252 aa).

A divalent metal cation contacts are provided by Asp8, Asp9, Ser39, and Asn91.

It belongs to the SurE nucleotidase family. A divalent metal cation serves as cofactor.

The protein localises to the cytoplasm. It catalyses the reaction a ribonucleoside 5'-phosphate + H2O = a ribonucleoside + phosphate. Nucleotidase that shows phosphatase activity on nucleoside 5'-monophosphates. The polypeptide is 5'-nucleotidase SurE (Gemmatimonas aurantiaca (strain DSM 14586 / JCM 11422 / NBRC 100505 / T-27)).